Consider the following 82-residue polypeptide: Immediate early response 3-interacting protein 1 (82 aa).

Transmembrane regions (helical) follow at residues 2–22 (AFTL…VAVL) and 62–82 (VMRV…LLFG).

This sequence belongs to the YOS1 family.

It is found in the endoplasmic reticulum membrane. Regulator of endoplasmic reticulum secretion that acts as a key determinant of brain size. Required for secretion of extracellular matrix proteins. Required for correct brain development by depositing sufficient extracellular matrix proteins for tissue integrity and the proliferation of neural progenitors. Acts as a regulator of the unfolded protein response (UPR). In Xenopus laevis (African clawed frog), this protein is Immediate early response 3-interacting protein 1.